The sequence spans 344 residues: Acireductone dioxygenase (344 aa).

Residues His92, His94, Glu98, and His137 each coordinate Fe(2+). 4 residues coordinate Ni(2+): His92, His94, Glu98, and His137.

The protein belongs to the acireductone dioxygenase (ARD) family. Fe(2+) serves as cofactor. The cofactor is Ni(2+).

The protein localises to the cytoplasm. The protein resides in the nucleus. The enzyme catalyses 1,2-dihydroxy-5-(methylsulfanyl)pent-1-en-3-one + O2 = 4-methylsulfanyl-2-oxobutanoate + formate + 2 H(+). The catalysed reaction is 1,2-dihydroxy-5-(methylsulfanyl)pent-1-en-3-one + O2 = 3-(methylsulfanyl)propanoate + CO + formate + 2 H(+). It participates in amino-acid biosynthesis; L-methionine biosynthesis via salvage pathway; L-methionine from S-methyl-5-thio-alpha-D-ribose 1-phosphate: step 5/6. Catalyzes 2 different reactions between oxygen and the acireductone 1,2-dihydroxy-3-keto-5-methylthiopentene (DHK-MTPene) depending upon the metal bound in the active site. Fe-containing acireductone dioxygenase (Fe-ARD) produces formate and 2-keto-4-methylthiobutyrate (KMTB), the alpha-ketoacid precursor of methionine in the methionine recycle pathway. Ni-containing acireductone dioxygenase (Ni-ARD) produces methylthiopropionate, carbon monoxide and formate, and does not lie on the methionine recycle pathway. This is Acireductone dioxygenase from Leishmania major.